Here is a 466-residue protein sequence, read N- to C-terminus: Asparagine--tRNA ligase (466 aa).

This sequence belongs to the class-II aminoacyl-tRNA synthetase family. Homodimer.

It localises to the cytoplasm. It catalyses the reaction tRNA(Asn) + L-asparagine + ATP = L-asparaginyl-tRNA(Asn) + AMP + diphosphate + H(+). The sequence is that of Asparagine--tRNA ligase from Shewanella halifaxensis (strain HAW-EB4).